The primary structure comprises 293 residues: MEEVETAEEQLAKQHRKEKKDLQAKIQSMKNAVPKNDKKRRKQLTEDIAKLEAELSQKHENELKLQNTSSVEEVSDALDSMSVANHEEQSDPSKQSRTSKAQKRRDKKAALEKEREMRIAEAEVENLSGSRHQEGLKLREKLVERHLQIKEISSDGHCMYRAVEHQLTERGLALGLKELRDQTAQYMRSHADDFMPFLTNPNTGDMYTAEEFEKYCSDVADTAAWGGQLELKALSQVLQLPIEVIQADSPCITIGEEYDKPKITLIYMRHAYGLGEHYNSVEPLKDLANEEEG.

Disordered stretches follow at residues 1–43 (MEEV…RRKQ) and 57–114 (QKHE…LEKE). Residues 147-284 (LQIKEISSDG…GEHYNSVEPL (138 aa)) enclose the OTU domain. Residues 152 to 158 (ISSDGHC) form a cys-loop region. Residue D155 is part of the active site. Catalysis depends on C158, which acts as the Nucleophile. Residues 219 to 229 (VADTAAWGGQL) form a variable-loop region. The interval 267–277 (YMRHAYGLGEH) is his-loop. H277 is an active-site residue.

The catalysed reaction is Thiol-dependent hydrolysis of ester, thioester, amide, peptide and isopeptide bonds formed by the C-terminal Gly of ubiquitin (a 76-residue protein attached to proteins as an intracellular targeting signal).. Functionally, deubiquitinating enzyme that may play a role in the ubiquitin-dependent regulation of different cellular processes. This is Deubiquitinase OTUD6B (otud6b) from Danio rerio (Zebrafish).